We begin with the raw amino-acid sequence, 62 residues long: UPF0291 protein CLJ_B2839 (62 aa).

This sequence belongs to the UPF0291 family.

It localises to the cytoplasm. The protein is UPF0291 protein CLJ_B2839 of Clostridium botulinum (strain 657 / Type Ba4).